The chain runs to 125 residues: MAITKEDVLEFISNLSVLELSELVKEFEEKFGVSAAPVMVAGAAVAGAAGGAAEEKTEFDIVLQDGGDKKINVIKVVRALTGLGLKEAKDAVEQTPSVLKEGVSKAEAEEAKKQLEEAGAKVELK.

It belongs to the bacterial ribosomal protein bL12 family. As to quaternary structure, homodimer. Part of the ribosomal stalk of the 50S ribosomal subunit. Forms a multimeric L10(L12)X complex, where L10 forms an elongated spine to which 2 to 4 L12 dimers bind in a sequential fashion. Binds GTP-bound translation factors.

Functionally, forms part of the ribosomal stalk which helps the ribosome interact with GTP-bound translation factors. Is thus essential for accurate translation. The sequence is that of Large ribosomal subunit protein bL12 from Campylobacter lari (strain RM2100 / D67 / ATCC BAA-1060).